The following is a 766-amino-acid chain: 5-methyltetrahydropteroyltriglutamate--homocysteine methyltransferase (766 aa).

5-methyltetrahydropteroyltri-L-glutamate contacts are provided by residues 16–19 (RELK) and Lys119. Residues 440-442 (IGS) and Glu493 each bind L-homocysteine. L-methionine is bound by residues 440 to 442 (IGS) and Glu493. Residues 524–525 (RC) and Trp570 each bind 5-methyltetrahydropteroyltri-L-glutamate. Asp608 is a binding site for L-homocysteine. Asp608 is a binding site for L-methionine. A 5-methyltetrahydropteroyltri-L-glutamate-binding site is contributed by Glu614. 3 residues coordinate Zn(2+): His650, Cys652, and Glu674. The Proton donor role is filled by His703. Cys735 provides a ligand contact to Zn(2+).

The protein belongs to the vitamin-B12 independent methionine synthase family. Zn(2+) is required as a cofactor.

It carries out the reaction 5-methyltetrahydropteroyltri-L-glutamate + L-homocysteine = tetrahydropteroyltri-L-glutamate + L-methionine. The protein operates within amino-acid biosynthesis; L-methionine biosynthesis via de novo pathway; L-methionine from L-homocysteine (MetE route): step 1/1. In terms of biological role, catalyzes the transfer of a methyl group from 5-methyltetrahydrofolate to homocysteine resulting in methionine formation. This Pseudomonas aeruginosa (strain ATCC 15692 / DSM 22644 / CIP 104116 / JCM 14847 / LMG 12228 / 1C / PRS 101 / PAO1) protein is 5-methyltetrahydropteroyltriglutamate--homocysteine methyltransferase.